The sequence spans 542 residues: Protein phosphatase 1G (542 aa).

Glycine 2 carries N-myristoyl glycine lipidation. Arginine 22 carries the omega-N-methylarginine modification. One can recognise a PPM-type phosphatase domain in the interval 26 to 502 (PYGFSAMQGW…DNMTCIIICF (477 aa)). The Mn(2+) site is built by aspartate 60 and glycine 61. Disordered regions lie at residues 118-139 (AGRP…DVDN) and 162-325 (QNCQ…SDSG). Residue threonine 122 is modified to Phosphothreonine. Acidic residues-rich tracts occupy residues 123–139 (EDED…DVDN) and 259–309 (DSED…DEEM). Residue lysine 380 is modified to N6-acetyllysine. Mn(2+) contacts are provided by aspartate 438 and aspartate 493. Residues 510 to 542 (LQPESGKRKLEEALSTEGAEENGNSDKKKAKRD) are disordered. Serine 524 bears the Phosphoserine mark.

Belongs to the PP2C family. In terms of assembly, interacts with NOL3; may dephosphorylate NOL3. The cofactor is Mg(2+). Mn(2+) serves as cofactor.

The protein resides in the cytoplasm. It is found in the membrane. The enzyme catalyses O-phospho-L-seryl-[protein] + H2O = L-seryl-[protein] + phosphate. It catalyses the reaction O-phospho-L-threonyl-[protein] + H2O = L-threonyl-[protein] + phosphate. This is Protein phosphatase 1G from Rattus norvegicus (Rat).